The primary structure comprises 316 residues: F-box protein At4g09920 (316 aa).

The 47-residue stretch at 1-47 (MDRIIGLPDEVLVKILSFVPTKVAVSTSILSKRWEFLWMWLTKLKFG) folds into the F-box domain.

In Arabidopsis thaliana (Mouse-ear cress), this protein is F-box protein At4g09920.